Reading from the N-terminus, the 427-residue chain is Peptidase B (427 aa).

Residues Lys195 and Asp200 each contribute to the Mn(2+) site. Residue Lys207 is part of the active site. Residues Asp218, Asp277, and Glu279 each coordinate Mn(2+). The active site involves Arg281.

Belongs to the peptidase M17 family. As to quaternary structure, homohexamer. The cofactor is Mn(2+).

The protein localises to the cytoplasm. It carries out the reaction Release of an N-terminal amino acid, Xaa, from a peptide or arylamide. Xaa is preferably Glu or Asp but may be other amino acids, including Leu, Met, His, Cys and Gln.. Its function is as follows. Probably plays an important role in intracellular peptide degradation. The chain is Peptidase B from Escherichia coli O157:H7.